Here is a 581-residue protein sequence, read N- to C-terminus: Arginine--tRNA ligase (581 aa).

Residues 126-136 (PNLAKEMHVGH) carry the 'HIGH' region motif.

The protein belongs to the class-I aminoacyl-tRNA synthetase family. As to quaternary structure, monomer.

The protein resides in the cytoplasm. It carries out the reaction tRNA(Arg) + L-arginine + ATP = L-arginyl-tRNA(Arg) + AMP + diphosphate. The sequence is that of Arginine--tRNA ligase from Shewanella piezotolerans (strain WP3 / JCM 13877).